The following is a 331-amino-acid chain: Induced myeloid leukemia cell differentiation protein Mcl-1 homolog (331 aa).

The segment at 85 to 156 is PEST-like; that stretch reads LAVPPEEMAA…PPEEEEDDLY (72 aa). S102 is subject to Phosphoserine. K117 participates in a covalent cross-link: Glycyl lysine isopeptide (Lys-Gly) (interchain with G-Cter in ubiquitin). A disordered region spans residues 130-154; the sequence is EAAKSSGADGSLPSTPPPPEEEEDD. Position 140 is a phosphoserine; by GSK3-alpha and GSK3-beta (S140). S143 is modified (phosphoserine). Position 144 is a phosphothreonine; by MAPK (T144). Residues K175 and K178 each participate in a glycyl lysine isopeptide (Lys-Gly) (interchain with G-Cter in ubiquitin) cross-link. The short motif at 190–204 is the BH3 element; it reads ALETLRRVGDGVQRN. The BH1 signature appears at 234-253; that stretch reads VFKDGVTNWGRIVTLISFGA. The BH2 motif lies at 285 to 300; sequence DWLVKQRGWDGFVEFF. Residues 308–330 form a helical membrane-spanning segment; the sequence is GIRNVLLAFAGVAGVGAGLAYLI.

Belongs to the Bcl-2 family. Interacts with HIF3A isoform 2 (via C-terminus domain). Interacts with BAD, BOK, BIK, BAX, BAK1, and TPT1. Interacts with BBC3, BMF and PMAIP1. Interacts with BOP. Interacts with BCL2L11; this interaction may sequester BCL2L11 and prevent its pro-apoptotic activity. Interacts with GIMAP5 and HSPA8/HSC70; the interaction between HSPA8 and MCL1 is impaired in the absence of GIMAP5. In terms of processing, cleaved by CASP3 during apoptosis, yielding a pro-apoptotic C-terminal fragment. Rapidly degraded in the absence of phosphorylation in the PEST region. Post-translationally, phosphorylated on Ser-140, by GSK3, in response to IL3/interleukin-3 withdrawal. Phosphorylation at Ser-140 induces ubiquitination and proteasomal degradation, abrogating the anti-apoptotic activity. Treatment with taxol or okadaic acid induces phosphorylation on additional sites. In terms of processing, ubiquitinated. Ubiquitination is induced by phosphorylation at Ser-140. Deubiquitinated by USP20; leading to increased stability.

Its subcellular location is the membrane. It localises to the cytoplasm. The protein resides in the mitochondrion. It is found in the nucleus. The protein localises to the nucleoplasm. Functionally, involved in the regulation of apoptosis versus cell survival, and in the maintenance of viability but not of proliferation. Mediates its effects by interactions with a number of other regulators of apoptosis. Isoform 2 has antiapoptotic activity. The protein is Induced myeloid leukemia cell differentiation protein Mcl-1 homolog (Mcl1) of Mus musculus (Mouse).